Reading from the N-terminus, the 372-residue chain is UDP-N-acetylglucosamine--N-acetylmuramyl-(pentapeptide) pyrophosphoryl-undecaprenol N-acetylglucosamine transferase (372 aa).

Residues 10–12, N124, R166, S196, I256, and Q301 contribute to the UDP-N-acetyl-alpha-D-glucosamine site; that span reads TGG.

The protein belongs to the glycosyltransferase 28 family. MurG subfamily.

The protein localises to the cell membrane. It catalyses the reaction di-trans,octa-cis-undecaprenyl diphospho-N-acetyl-alpha-D-muramoyl-L-alanyl-D-glutamyl-meso-2,6-diaminopimeloyl-D-alanyl-D-alanine + UDP-N-acetyl-alpha-D-glucosamine = di-trans,octa-cis-undecaprenyl diphospho-[N-acetyl-alpha-D-glucosaminyl-(1-&gt;4)]-N-acetyl-alpha-D-muramoyl-L-alanyl-D-glutamyl-meso-2,6-diaminopimeloyl-D-alanyl-D-alanine + UDP + H(+). It functions in the pathway cell wall biogenesis; peptidoglycan biosynthesis. Cell wall formation. Catalyzes the transfer of a GlcNAc subunit on undecaprenyl-pyrophosphoryl-MurNAc-pentapeptide (lipid intermediate I) to form undecaprenyl-pyrophosphoryl-MurNAc-(pentapeptide)GlcNAc (lipid intermediate II). The sequence is that of UDP-N-acetylglucosamine--N-acetylmuramyl-(pentapeptide) pyrophosphoryl-undecaprenol N-acetylglucosamine transferase from Desulforamulus reducens (strain ATCC BAA-1160 / DSM 100696 / MI-1) (Desulfotomaculum reducens).